The primary structure comprises 423 residues: Serpin B12 (423 aa).

The span at 63-72 (LSKDEHKEPN) shows a compositional bias: basic and acidic residues. The segment at 63–106 (LSKDEHKEPNDPSPQSESKASDSSLEGQKQTSASQDQQGESTND) is disordered. The segment covering 75–106 (SPQSESKASDSSLEGQKQTSASQDQQGESTND) has biased composition (polar residues).

The protein belongs to the serpin family. Ov-serpin subfamily. As to quaternary structure, interacts with SLFN12; as part of a pathway regulating cell differentiation.

Its subcellular location is the cytoplasm. Inhibits trypsin and plasmin, but not thrombin, coagulation factor Xa, or urokinase-type plasminogen activator. May play a role in cell differentiation. This chain is Serpin B12 (Serpinb12), found in Mus musculus (Mouse).